We begin with the raw amino-acid sequence, 561 residues long: SH3 domain-binding protein 2 (561 aa).

In terms of domain architecture, PH spans 26–130 (GVAKAGYLHK…WMALLRREIG (105 aa)). Disordered stretches follow at residues 160–316 (VDIS…GACS) and 333–451 (KLKS…YEKV). A compositionally biased stretch (acidic residues) spans 170 to 188 (DNEDYEHDDEDDSYLEPDS). A phosphotyrosine; by SYK mark is found at Tyr174 and Tyr183. Residues 201-210 (PPAYPPPPVP) carry the SH3-binding motif. 2 stretches are compositionally biased toward pro residues: residues 202-213 (PAYPPPPVPTPR) and 233-242 (PLLPPPPPKH). Positions 252–266 (EDSKRDPLCPRRAEP) are enriched in basic and acidic residues. Ser278 carries the phosphoserine modification. Positions 342–354 (RGPPTSEPPPVPA) are enriched in pro residues. Phosphoserine occurs at positions 416 and 427. The residue at position 448 (Tyr448) is a Phosphotyrosine; by SYK. Residues 457–555 (VFVNTTESCE…HQSLLLRHPY (99 aa)) form the SH2 domain.

In terms of processing, phosphorylated. Phosphorylation at Tyr-448 may stimulate the activity of the LYN kinase. As to expression, expressed in a variety of tissues including lung, liver, skeletal muscle, kidney and pancreas.

In terms of biological role, binds differentially to the SH3 domains of certain proteins of signal transduction pathways. Binds to phosphatidylinositols; linking the hemopoietic tyrosine kinase fes to the cytoplasmic membrane in a phosphorylation dependent mechanism. This Homo sapiens (Human) protein is SH3 domain-binding protein 2 (SH3BP2).